The sequence spans 89 residues: Small ribosomal subunit protein uS15 (89 aa).

This sequence belongs to the universal ribosomal protein uS15 family. In terms of assembly, part of the 30S ribosomal subunit. Forms a bridge to the 50S subunit in the 70S ribosome, contacting the 23S rRNA.

In terms of biological role, one of the primary rRNA binding proteins, it binds directly to 16S rRNA where it helps nucleate assembly of the platform of the 30S subunit by binding and bridging several RNA helices of the 16S rRNA. Functionally, forms an intersubunit bridge (bridge B4) with the 23S rRNA of the 50S subunit in the ribosome. The polypeptide is Small ribosomal subunit protein uS15 (Azorhizobium caulinodans (strain ATCC 43989 / DSM 5975 / JCM 20966 / LMG 6465 / NBRC 14845 / NCIMB 13405 / ORS 571)).